A 552-amino-acid polypeptide reads, in one-letter code: Glutathione reductase, chloroplastic/mitochondrial (552 aa).

The transit peptide at 1-60 directs the protein to the chloroplast and mitochondrion; that stretch reads MNQAMATPLSLSCCSPTLTRSTLFFTKTFPFSRSFSTPLPLSTKTLISLSPPHRTFAVRA. FAD-binding residues include serine 83, glycine 84, glutamate 103, threonine 120, cysteine 121, and lysine 129. A glutathione-binding site is contributed by serine 83. An intrachain disulfide couples cysteine 121 to cysteine 126. Tyrosine 178 serves as a coordination point for glutathione. FAD is bound at residue glycine 194. NADP(+) contacts are provided by glycine 254, isoleucine 257, glutamate 260, arginine 277, arginine 283, and glycine 341. FAD is bound by residues aspartate 382 and threonine 390. Residue alanine 420 coordinates NADP(+). Histidine 515 provides a ligand contact to FAD. Catalysis depends on histidine 515, which acts as the Proton acceptor. The segment at 527-552 is disordered; sequence TPTRKVRKNQASQGKSDSKAKAVAGS.

It belongs to the class-I pyridine nucleotide-disulfide oxidoreductase family. In terms of assembly, homodimer. The cofactor is FAD.

It localises to the plastid. The protein resides in the chloroplast. The protein localises to the mitochondrion. It catalyses the reaction 2 glutathione + NADP(+) = glutathione disulfide + NADPH + H(+). Catalyzes the reduction of glutathione disulfide (GSSG) to reduced glutathione (GSH). Maintains high levels of GSH in the chloroplast. The protein is Glutathione reductase, chloroplastic/mitochondrial (GR) of Pisum sativum (Garden pea).